Reading from the N-terminus, the 935-residue chain is Intimin (935 aa).

The first 41 residues, 1–41, serve as a signal peptide directing secretion; the sequence is MITHGFYARTRHKHKLKKTFIMLSAGLGLFFYVNQNSFANG. The segment at 40–153 is peptidoglycan-binding; sequence NGENYFKLSS…KMTKMSPDAT (114 aa). The sufficient for homodimerization stretch occupies residues 40-153; the sequence is NGENYFKLSS…KMTKMSPDAT (114 aa). Positions 40–212 are required for periplasmic localization; that stretch reads NGENYFKLSS…LQAWLQHYGT (173 aa). Positions 63–112 constitute a LysM domain; sequence LFYTLKTGETVSSISKSQGISLSVIWSLNKHLYSSESEMLKAAPGQQIIL. The segment at 210–411 is inverse autotransporter; it reads YGTAEVNLQS…LYSMQFRYQF (202 aa). The signature sequence for beta-barrel assembly machinery (BAM), which recognizes the unfolded beta-barrel in the periplasm stretch occupies residues 402–411; sequence LYSMQFRYQF. Big-1 domains lie at 560–653 and 660–754; these read VTDF…VIFV and ITEI…VTFF. The BIG2 domain occupies 790-834; sequence GGNGTYSWHSENTNIATVDESGKVTLKGKGTAVINVTSGDKQTVS. Cys859 and Cys933 are disulfide-bonded.

This sequence belongs to the intimin/invasin family. In terms of assembly, homodimer. Interacts with Tir.

It is found in the cell outer membrane. An inverse autotransporter. Adhesin, which mediates attachment to the human intestine epithelial cells. Necessary for the production of attaching and effacing lesions on infected human tissue culture cells. Anchored to the outer membrane by binding to peptidoglycan (PGN) via its periplasmic domain, thus helping in receptor interactions during host invasion. PGN-binding may also aid in resisting mechanical and chemical stress during transit of the bacterium through the gastrointestinal tract of the host. This Escherichia coli O111:H- protein is Intimin (eae).